Consider the following 425-residue polypeptide: Threonine synthase (425 aa).

Position 105 is an N6-(pyridoxal phosphate)lysine (Lys105).

This sequence belongs to the threonine synthase family. It depends on pyridoxal 5'-phosphate as a cofactor.

It carries out the reaction O-phospho-L-homoserine + H2O = L-threonine + phosphate. Its pathway is amino-acid biosynthesis; L-threonine biosynthesis; L-threonine from L-aspartate: step 5/5. Its function is as follows. Catalyzes the gamma-elimination of phosphate from L-phosphohomoserine and the beta-addition of water to produce L-threonine. This is Threonine synthase (thrC) from Haemophilus influenzae (strain ATCC 51907 / DSM 11121 / KW20 / Rd).